Consider the following 163-residue polypeptide: Lipoprotein signal peptidase (163 aa).

The next 4 helical transmembrane spans lie at Ala-9–Leu-29, Ile-42–Gly-62, Trp-67–Leu-87, and Ser-93–Ile-113. Active-site residues include Asp-123 and Asp-141. A helical membrane pass occupies residues Phe-137–Leu-157.

This sequence belongs to the peptidase A8 family.

The protein localises to the cell inner membrane. It carries out the reaction Release of signal peptides from bacterial membrane prolipoproteins. Hydrolyzes -Xaa-Yaa-Zaa-|-(S,diacylglyceryl)Cys-, in which Xaa is hydrophobic (preferably Leu), and Yaa (Ala or Ser) and Zaa (Gly or Ala) have small, neutral side chains.. Its pathway is protein modification; lipoprotein biosynthesis (signal peptide cleavage). In terms of biological role, this protein specifically catalyzes the removal of signal peptides from prolipoproteins. In Coxiella burnetii (strain RSA 331 / Henzerling II), this protein is Lipoprotein signal peptidase.